Reading from the N-terminus, the 901-residue chain is HTH-type transcriptional regulator MalT (901 aa).

39–46 (SPAGYGKT) is a binding site for ATP. An HTH luxR-type domain is found at 829 to 894 (ELIRTSPLTQ…DAVQHAQQLL (66 aa)). A DNA-binding region (H-T-H motif) is located at residues 853–872 (NEQIAGELAVAATTIKTHIR).

This sequence belongs to the MalT family. Monomer in solution. Oligomerizes to an active state in the presence of the positive effectors ATP and maltotriose.

With respect to regulation, activated by ATP and maltotriose, which are both required for DNA binding. In terms of biological role, positively regulates the transcription of the maltose regulon whose gene products are responsible for uptake and catabolism of malto-oligosaccharides. Specifically binds to the promoter region of its target genes, recognizing a short DNA motif called the MalT box. In Salmonella typhi, this protein is HTH-type transcriptional regulator MalT.